A 365-amino-acid polypeptide reads, in one-letter code: Succinyl-diaminopimelate desuccinylase (365 aa).

Residue H64 participates in Zn(2+) binding. The active site involves D66. A Zn(2+)-binding site is contributed by D95. The active-site Proton acceptor is the E125. The Zn(2+) site is built by E126, E154, and H339.

This sequence belongs to the peptidase M20A family. DapE subfamily. As to quaternary structure, homodimer. Zn(2+) serves as cofactor. It depends on Co(2+) as a cofactor.

The catalysed reaction is N-succinyl-(2S,6S)-2,6-diaminopimelate + H2O = (2S,6S)-2,6-diaminopimelate + succinate. Its pathway is amino-acid biosynthesis; L-lysine biosynthesis via DAP pathway; LL-2,6-diaminopimelate from (S)-tetrahydrodipicolinate (succinylase route): step 3/3. Functionally, catalyzes the hydrolysis of N-succinyl-L,L-diaminopimelic acid (SDAP), forming succinate and LL-2,6-diaminopimelate (DAP), an intermediate involved in the bacterial biosynthesis of lysine and meso-diaminopimelic acid, an essential component of bacterial cell walls. This is Succinyl-diaminopimelate desuccinylase from Campylobacter fetus subsp. fetus (strain 82-40).